Reading from the N-terminus, the 257-residue chain is MPADFTIVIPARYGSTRLPGKPLLELGGKPMIAHVCERALEAGAAEVVVATDDARIAEAVDGLPVTAMLTRTEHASGTERLAEVAERRAWSDDTLVVNLQGDEPFMDAALLRALAEALGRREDCRVATLAAPIHRPEEIFDPNVVKVVTDGENRALYFSRAAVPWDRESFAEGAGVPMPGMPYRRHIGVYAYTASYLRRYVDLEPSPLEHVERLEQLRILWHGDRILVVPVEGAPAPGVDTAADLERARRHLSGRTP.

The protein belongs to the KdsB family.

It localises to the cytoplasm. The catalysed reaction is 3-deoxy-alpha-D-manno-oct-2-ulosonate + CTP = CMP-3-deoxy-beta-D-manno-octulosonate + diphosphate. Its pathway is nucleotide-sugar biosynthesis; CMP-3-deoxy-D-manno-octulosonate biosynthesis; CMP-3-deoxy-D-manno-octulosonate from 3-deoxy-D-manno-octulosonate and CTP: step 1/1. The protein operates within bacterial outer membrane biogenesis; lipopolysaccharide biosynthesis. In terms of biological role, activates KDO (a required 8-carbon sugar) for incorporation into bacterial lipopolysaccharide in Gram-negative bacteria. The chain is 3-deoxy-manno-octulosonate cytidylyltransferase from Methylococcus capsulatus (strain ATCC 33009 / NCIMB 11132 / Bath).